The following is a 224-amino-acid chain: Phosphoribosylformylglycinamidine synthase subunit PurQ (224 aa).

Residues 2 to 224 enclose the Glutamine amidotransferase type-1 domain; it reads TVAVVRFGGS…DGQGILGAFA (223 aa). The active-site Nucleophile is C85. Catalysis depends on residues H202 and E204.

Part of the FGAM synthase complex composed of 1 PurL, 1 PurQ and 2 PurS subunits.

Its subcellular location is the cytoplasm. The enzyme catalyses N(2)-formyl-N(1)-(5-phospho-beta-D-ribosyl)glycinamide + L-glutamine + ATP + H2O = 2-formamido-N(1)-(5-O-phospho-beta-D-ribosyl)acetamidine + L-glutamate + ADP + phosphate + H(+). It catalyses the reaction L-glutamine + H2O = L-glutamate + NH4(+). It participates in purine metabolism; IMP biosynthesis via de novo pathway; 5-amino-1-(5-phospho-D-ribosyl)imidazole from N(2)-formyl-N(1)-(5-phospho-D-ribosyl)glycinamide: step 1/2. Its function is as follows. Part of the phosphoribosylformylglycinamidine synthase complex involved in the purines biosynthetic pathway. Catalyzes the ATP-dependent conversion of formylglycinamide ribonucleotide (FGAR) and glutamine to yield formylglycinamidine ribonucleotide (FGAM) and glutamate. The FGAM synthase complex is composed of three subunits. PurQ produces an ammonia molecule by converting glutamine to glutamate. PurL transfers the ammonia molecule to FGAR to form FGAM in an ATP-dependent manner. PurS interacts with PurQ and PurL and is thought to assist in the transfer of the ammonia molecule from PurQ to PurL. The protein is Phosphoribosylformylglycinamidine synthase subunit PurQ of Halobacterium salinarum (strain ATCC 700922 / JCM 11081 / NRC-1) (Halobacterium halobium).